A 221-amino-acid polypeptide reads, in one-letter code: Vesicle-associated membrane protein 722 (221 aa).

Residues 1-196 lie on the Cytoplasmic side of the membrane; the sequence is MAQQSLIYSF…MWFQNMKIKL (196 aa). Positions 10–114 constitute a Longin domain; the sequence is FVARGTVILV…SLNKEFGSKL (105 aa). A v-SNARE coiled-coil homology domain is found at 130–190; it reads KLAKVKAQVS…TQMRRKMWFQ (61 aa). Residues 197-217 traverse the membrane as a helical; Anchor for type IV membrane protein segment; that stretch reads IVLAIIIALILIIILSICGGF. Over 218-221 the chain is Vesicular; the sequence is NCGK.

It belongs to the synaptobrevin family. In terms of tissue distribution, highly expressed in stems and roots. Detected in flowers and leaves.

The protein localises to the cell membrane. It localises to the early endosome membrane. Involved in the targeting and/or fusion of transport vesicles to their target membrane. The sequence is that of Vesicle-associated membrane protein 722 from Arabidopsis thaliana (Mouse-ear cress).